Reading from the N-terminus, the 328-residue chain is Flap endonuclease 1 (328 aa).

Positions Met-1 to Lys-98 are N-domain. Positions 27, 80, 152, 154, 173, 175, and 227 each coordinate Mg(2+). Residues Ala-116–Gly-248 are I-domain. An interaction with PCNA region spans residues Ala-320–Phe-328.

Belongs to the XPG/RAD2 endonuclease family. FEN1 subfamily. In terms of assembly, interacts with PCNA. PCNA stimulates the nuclease activity without altering cleavage specificity. Mg(2+) is required as a cofactor.

Its function is as follows. Structure-specific nuclease with 5'-flap endonuclease and 5'-3' exonuclease activities involved in DNA replication and repair. During DNA replication, cleaves the 5'-overhanging flap structure that is generated by displacement synthesis when DNA polymerase encounters the 5'-end of a downstream Okazaki fragment. Binds the unpaired 3'-DNA end and kinks the DNA to facilitate 5' cleavage specificity. Cleaves one nucleotide into the double-stranded DNA from the junction in flap DNA, leaving a nick for ligation. Also involved in the base excision repair (BER) pathway. Acts as a genome stabilization factor that prevents flaps from equilibrating into structures that lead to duplications and deletions. Also possesses 5'-3' exonuclease activity on nicked or gapped double-stranded DNA. This chain is Flap endonuclease 1, found in Methanosphaera stadtmanae (strain ATCC 43021 / DSM 3091 / JCM 11832 / MCB-3).